The following is a 220-amino-acid chain: Ribosomal RNA large subunit methyltransferase E (220 aa).

Residues G60, W62, D92, D108, and D133 each coordinate S-adenosyl-L-methionine. K173 functions as the Proton acceptor in the catalytic mechanism. The disordered stretch occupies residues 195-220 (APRKPKASRDKSSETFILGRHLKRPR).

It belongs to the class I-like SAM-binding methyltransferase superfamily. RNA methyltransferase RlmE family.

It is found in the cytoplasm. It carries out the reaction uridine(2552) in 23S rRNA + S-adenosyl-L-methionine = 2'-O-methyluridine(2552) in 23S rRNA + S-adenosyl-L-homocysteine + H(+). Its function is as follows. Specifically methylates the uridine in position 2552 of 23S rRNA at the 2'-O position of the ribose in the fully assembled 50S ribosomal subunit. The sequence is that of Ribosomal RNA large subunit methyltransferase E from Burkholderia lata (strain ATCC 17760 / DSM 23089 / LMG 22485 / NCIMB 9086 / R18194 / 383).